The following is a 418-amino-acid chain: Glutamyl-tRNA reductase (418 aa).

Substrate is bound by residues 49–52, Ser109, 114–116, and Gln120; these read TCNR and EPQ. Cys50 serves as the catalytic Nucleophile. 189–194 is an NADP(+) binding site; it reads GAGETI.

It belongs to the glutamyl-tRNA reductase family. Homodimer.

It carries out the reaction (S)-4-amino-5-oxopentanoate + tRNA(Glu) + NADP(+) = L-glutamyl-tRNA(Glu) + NADPH + H(+). It functions in the pathway porphyrin-containing compound metabolism; protoporphyrin-IX biosynthesis; 5-aminolevulinate from L-glutamyl-tRNA(Glu): step 1/2. Its function is as follows. Catalyzes the NADPH-dependent reduction of glutamyl-tRNA(Glu) to glutamate 1-semialdehyde (GSA). This chain is Glutamyl-tRNA reductase, found in Enterobacter sp. (strain 638).